The sequence spans 489 residues: Probable capsid protein (489 aa).

The segment covering 87–101 (RMERGESSETKREQQ) has biased composition (basic and acidic residues). The disordered stretch occupies residues 87 to 111 (RMERGESSETKREQQDLGATRKRKI). The short motif at 107–110 (RKRK) is the Nuclear localization signal element. The CCHC-type zinc-finger motif lies at 409 to 426 (CRCWICTEEGHYANECPN). The tract at residues 466–489 (ETTSEEESTTDSDSSSSDDEQLSF) is disordered.

This sequence belongs to the caulimoviridae capsid protein family. Interacts (via nuclear localization signal) with host importin alpha.

It is found in the virion. It localises to the host nucleus. In terms of biological role, self assembles to form an icosahedral capsid, about 50 nm in diameter, nm, composed of 420 subunits of the viral capsid protein. The capsid encapsulates the genomic dsDNA. Following virus entry into host cell, provides nuclear import of the viral genome. Virus particles do not enter the nucleus, but dock at the nuclear membrane through the interaction with host importins. The polypeptide is Probable capsid protein (Scrophularia californica (California bee plant)).